Consider the following 295-residue polypeptide: Probable endonuclease 4 (295 aa).

9 residues coordinate Zn(2+): H78, H118, E154, D188, H191, H225, D238, H240, and E270.

Belongs to the AP endonuclease 2 family. Requires Zn(2+) as cofactor.

It carries out the reaction Endonucleolytic cleavage to 5'-phosphooligonucleotide end-products.. Its function is as follows. Endonuclease IV plays a role in DNA repair. It cleaves phosphodiester bonds at apurinic or apyrimidinic (AP) sites, generating a 3'-hydroxyl group and a 5'-terminal sugar phosphate. This chain is Probable endonuclease 4, found in Vibrio parahaemolyticus serotype O3:K6 (strain RIMD 2210633).